The following is a 161-amino-acid chain: Phosphopantetheine adenylyltransferase (161 aa).

A substrate-binding site is contributed by Thr-10. ATP is bound by residues 10–11 and His-18; that span reads TF. Residues Lys-42, Leu-74, and Arg-88 each coordinate substrate. ATP-binding positions include 89 to 91, Glu-99, and 123 to 129; these read GVR and YIHISST.

This sequence belongs to the bacterial CoaD family. As to quaternary structure, homohexamer. Mg(2+) is required as a cofactor.

The protein resides in the cytoplasm. It carries out the reaction (R)-4'-phosphopantetheine + ATP + H(+) = 3'-dephospho-CoA + diphosphate. The protein operates within cofactor biosynthesis; coenzyme A biosynthesis; CoA from (R)-pantothenate: step 4/5. In terms of biological role, reversibly transfers an adenylyl group from ATP to 4'-phosphopantetheine, yielding dephospho-CoA (dPCoA) and pyrophosphate. The protein is Phosphopantetheine adenylyltransferase of Aquifex aeolicus (strain VF5).